A 117-amino-acid polypeptide reads, in one-letter code: Large ribosomal subunit protein bL19 (117 aa).

Belongs to the bacterial ribosomal protein bL19 family.

In terms of biological role, this protein is located at the 30S-50S ribosomal subunit interface and may play a role in the structure and function of the aminoacyl-tRNA binding site. In Bacteroides thetaiotaomicron (strain ATCC 29148 / DSM 2079 / JCM 5827 / CCUG 10774 / NCTC 10582 / VPI-5482 / E50), this protein is Large ribosomal subunit protein bL19.